Consider the following 392-residue polypeptide: N-acetylneuraminate epimerase (392 aa).

An N-terminal signal peptide occupies residues 1–35 (MTQLYPQYKKQLTTKIVLFSALSLLMMASLPNTYA). 7 Kelch repeats span residues 56–100 (SLYV…VVLA), 102–155 (KLYV…TTLD), 157–192 (SQAV…AVIN), 193–238 (AYFN…SRMD), 241–290 (LILI…LAGA), 312–361 (KQFN…QGPD), and 363–392 (VILI…LHIE). Catalysis depends on glutamate 247, which acts as the Proton acceptor.

It belongs to the NanM family. In terms of assembly, homodimer.

The protein resides in the periplasm. The catalysed reaction is N-acetyl-alpha-neuraminate = N-acetyl-beta-neuraminate. In terms of biological role, converts alpha-N-acetylneuranimic acid (Neu5Ac) to the beta-anomer, accelerating the equilibrium between the alpha- and beta-anomers. Probably facilitates sialidase-negative bacteria to compete successfully for limited amounts of extracellular Neu5Ac, which is likely taken up in the beta-anomer. In addition, the rapid removal of sialic acid from solution might be advantageous to the bacterium to damp down host responses. The polypeptide is N-acetylneuraminate epimerase (Yersinia pseudotuberculosis serotype O:1b (strain IP 31758)).